Consider the following 806-residue polypeptide: GPI ethanolamine phosphate transferase 2 (806 aa).

3 N-linked (GlcNAc...) asparagine glycosylation sites follow: Asn-70, Asn-184, and Asn-242. 3 consecutive transmembrane segments (helical) span residues 396–416 (MLFLGVGMLSIVTAATAYCYI), 425–445 (SVLMIAVTALLGSSVFGSSFV), and 451–471 (IWWWIIIAVVGYSWATRPSCT). Residue Asn-488 is glycosylated (N-linked (GlcNAc...) asparagine). Transmembrane regions (helical) follow at residues 508–528 (PSIKWLLVCATLAVVALDGFT), 532–552 (LLSIFNLLAGLLCFVYKTCWA), 593–613 (LFFKVTAAIVCMRIAYNVVFA), 624–644 (LFTIVLIMQTASQNIPLFLVF), 664–684 (CEMFFVLSLILQNLSFFQFGG), 706–726 (IYVVGLLMCIGNMAPAIYWSL), 745–765 (LSSMFFYSVNSLLLLVACICM), and 782–804 (LLGWNILIHFLTETVLEPFLLMV).

Belongs to the PIGG/PIGN/PIGO family. PIGG subfamily.

It is found in the endoplasmic reticulum membrane. Its pathway is glycolipid biosynthesis; glycosylphosphatidylinositol-anchor biosynthesis. Its function is as follows. Ethanolamine phosphate transferase involved in glycosylphosphatidylinositol-anchor biosynthesis. Transfers ethanolamine phosphate to the GPI second mannose. The polypeptide is GPI ethanolamine phosphate transferase 2 (LAS21) (Eremothecium gossypii (strain ATCC 10895 / CBS 109.51 / FGSC 9923 / NRRL Y-1056) (Yeast)).